The chain runs to 479 residues: Aspartyl/glutamyl-tRNA(Asn/Gln) amidotransferase subunit B (479 aa).

Belongs to the GatB/GatE family. GatB subfamily. In terms of assembly, heterotrimer of A, B and C subunits.

The enzyme catalyses L-glutamyl-tRNA(Gln) + L-glutamine + ATP + H2O = L-glutaminyl-tRNA(Gln) + L-glutamate + ADP + phosphate + H(+). It carries out the reaction L-aspartyl-tRNA(Asn) + L-glutamine + ATP + H2O = L-asparaginyl-tRNA(Asn) + L-glutamate + ADP + phosphate + 2 H(+). Functionally, allows the formation of correctly charged Asn-tRNA(Asn) or Gln-tRNA(Gln) through the transamidation of misacylated Asp-tRNA(Asn) or Glu-tRNA(Gln) in organisms which lack either or both of asparaginyl-tRNA or glutaminyl-tRNA synthetases. The reaction takes place in the presence of glutamine and ATP through an activated phospho-Asp-tRNA(Asn) or phospho-Glu-tRNA(Gln). The polypeptide is Aspartyl/glutamyl-tRNA(Asn/Gln) amidotransferase subunit B (Myxococcus xanthus (strain DK1622)).